The following is a 513-amino-acid chain: Protein indeterminate-domain 11 (513 aa).

The tract at residues 1–84 (MMNKDMLLHQ…QPGNPDPESE (84 aa)) is disordered. Polar residues predominate over residues 10-45 (QHQQPQQDENMSNLTSASGDQASVSSGNITEASGSN). Low complexity predominate over residues 51–60 (QQQQEQQQQQ). Serine 89 bears the Phosphoserine mark. C2H2-type zinc fingers lie at residues 99–121 (FVCE…RRGH) and 141–171 (YVCP…CRKH). A Nuclear localization signal motif is present at residues 163–170 (IKKHFCRK). Residues 176-199 (WKCDKCSKKYAVQSDCKAHSKTCG) form a C2H2-type 2; degenerate zinc finger. 8 residues coordinate Zn(2+): cysteine 178, cysteine 181, histidine 194, cysteine 198, cysteine 205, cysteine 207, histidine 220, and cysteine 224. The CCHC-type 2; atypical zinc-finger motif lies at 203 to 226 (YRCDCGTLFSRRDSFITHRAFCEA). The tract at residues 213-225 (RRDSFITHRAFCE) is SHR-binding. Disordered stretches follow at residues 255–280 (ASHP…SHNH) and 334–358 (PQPH…SLFS). Low complexity predominate over residues 264 to 280 (TQPTINVSSSSSSSHNH).

The protein localises to the nucleus. Its function is as follows. Probable transcription factor. In Arabidopsis thaliana (Mouse-ear cress), this protein is Protein indeterminate-domain 11.